Here is a 542-residue protein sequence, read N- to C-terminus: Putative beta-glucosidase 23 (542 aa).

An N-terminal signal peptide occupies residues 1–29 (MAACTSSLVSLLLLLLLLLLLLVAGEATA). N34 carries an N-linked (GlcNAc...) asparagine glycan. Q88 is an a beta-D-glucoside binding site. N135 carries N-linked (GlcNAc...) asparagine glycosylation. Residue H216 participates in a beta-D-glucoside binding. Residue E262 is the Proton donor of the active site. Cysteines 281 and 289 form a disulfide. Position 405 (Y405) interacts with a beta-D-glucoside. N445 carries N-linked (GlcNAc...) asparagine glycosylation. 2 residues coordinate a beta-D-glucoside: W476 and F492.

Belongs to the glycosyl hydrolase 1 family.

The catalysed reaction is Hydrolysis of terminal, non-reducing beta-D-glucosyl residues with release of beta-D-glucose.. In Oryza sativa subsp. japonica (Rice), this protein is Putative beta-glucosidase 23 (BGLU23).